A 122-amino-acid polypeptide reads, in one-letter code: Large ribosomal subunit protein uL14 (122 aa).

This sequence belongs to the universal ribosomal protein uL14 family. As to quaternary structure, part of the 50S ribosomal subunit. Forms a cluster with proteins L3 and L19. In the 70S ribosome, L14 and L19 interact and together make contacts with the 16S rRNA in bridges B5 and B8.

Functionally, binds to 23S rRNA. Forms part of two intersubunit bridges in the 70S ribosome. The chain is Large ribosomal subunit protein uL14 from Chlorobaculum tepidum (strain ATCC 49652 / DSM 12025 / NBRC 103806 / TLS) (Chlorobium tepidum).